A 59-amino-acid polypeptide reads, in one-letter code: Large ribosomal subunit protein uL30 (59 aa).

The protein belongs to the universal ribosomal protein uL30 family. In terms of assembly, part of the 50S ribosomal subunit.

This chain is Large ribosomal subunit protein uL30, found in Staphylococcus saprophyticus subsp. saprophyticus (strain ATCC 15305 / DSM 20229 / NCIMB 8711 / NCTC 7292 / S-41).